A 635-amino-acid chain; its full sequence is Threonine--tRNA ligase (635 aa).

The TGS domain occupies 1 to 61 (MTVVRLPDGT…ETDSDLVLIT (61 aa)). Positions 242–533 (DHRKLGKQLD…LIEHHAGALP (292 aa)) are catalytic. Zn(2+) contacts are provided by C333, H384, and H510.

It belongs to the class-II aminoacyl-tRNA synthetase family. As to quaternary structure, homodimer. The cofactor is Zn(2+).

It is found in the cytoplasm. The catalysed reaction is tRNA(Thr) + L-threonine + ATP = L-threonyl-tRNA(Thr) + AMP + diphosphate + H(+). Functionally, catalyzes the attachment of threonine to tRNA(Thr) in a two-step reaction: L-threonine is first activated by ATP to form Thr-AMP and then transferred to the acceptor end of tRNA(Thr). Also edits incorrectly charged L-seryl-tRNA(Thr). The sequence is that of Threonine--tRNA ligase from Nitrosomonas europaea (strain ATCC 19718 / CIP 103999 / KCTC 2705 / NBRC 14298).